The following is a 454-amino-acid chain: Retinoblastoma-binding protein homolog 5 (454 aa).

WD repeat units follow at residues 23 to 64 (LQNA…RTFS), 65 to 104 (AHCL…LLHR), 153 to 192 (SSDE…CVAW), 196 to 235 (NTVQ…HQRG), 248 to 288 (VNKA…LIKI), and 292 to 330 (NKGE…NWSA).

Component of the SET2 complex (also known as the SET1/COMPASS complex), which contains at least set-2, swd-2.1, cfp-1, rbbp-5, wdr-5.1, dpy-30 and ash-2.

The protein resides in the nucleus. In terms of biological role, required for di- and trimethylation at 'Lys-4' of histone H3. Regulates left/right asymmetry of ASE sensory neurons, via its role as a component of the SET2 complex. The sequence is that of Retinoblastoma-binding protein homolog 5 (rbbp-5) from Caenorhabditis elegans.